The sequence spans 487 residues: UDP-N-acetylmuramoyl-L-alanyl-D-glutamate--2,6-diaminopimelate ligase (487 aa).

Serine 30 provides a ligand contact to UDP-N-acetyl-alpha-D-muramoyl-L-alanyl-D-glutamate. ATP is bound at residue 109–115; sequence GTNGKTS. UDP-N-acetyl-alpha-D-muramoyl-L-alanyl-D-glutamate-binding positions include 151-152, serine 178, and arginine 186; that span reads TT. Position 218 is an N6-carboxylysine (lysine 218). Residues arginine 379, 403–406, glycine 455, and glutamate 459 contribute to the meso-2,6-diaminopimelate site; that span reads DNPR. The Meso-diaminopimelate recognition motif signature appears at 403–406; it reads DNPR.

Belongs to the MurCDEF family. MurE subfamily. Mg(2+) is required as a cofactor. In terms of processing, carboxylation is probably crucial for Mg(2+) binding and, consequently, for the gamma-phosphate positioning of ATP.

The protein resides in the cytoplasm. It catalyses the reaction UDP-N-acetyl-alpha-D-muramoyl-L-alanyl-D-glutamate + meso-2,6-diaminopimelate + ATP = UDP-N-acetyl-alpha-D-muramoyl-L-alanyl-gamma-D-glutamyl-meso-2,6-diaminopimelate + ADP + phosphate + H(+). It functions in the pathway cell wall biogenesis; peptidoglycan biosynthesis. Functionally, catalyzes the addition of meso-diaminopimelic acid to the nucleotide precursor UDP-N-acetylmuramoyl-L-alanyl-D-glutamate (UMAG) in the biosynthesis of bacterial cell-wall peptidoglycan. The chain is UDP-N-acetylmuramoyl-L-alanyl-D-glutamate--2,6-diaminopimelate ligase from Alkaliphilus oremlandii (strain OhILAs) (Clostridium oremlandii (strain OhILAs)).